A 417-amino-acid polypeptide reads, in one-letter code: Tryptophan synthase beta chain (417 aa).

Lys110 carries the post-translational modification N6-(pyridoxal phosphate)lysine.

It belongs to the TrpB family. Tetramer of two alpha and two beta chains. Requires pyridoxal 5'-phosphate as cofactor.

It carries out the reaction (1S,2R)-1-C-(indol-3-yl)glycerol 3-phosphate + L-serine = D-glyceraldehyde 3-phosphate + L-tryptophan + H2O. Its pathway is amino-acid biosynthesis; L-tryptophan biosynthesis; L-tryptophan from chorismate: step 5/5. The beta subunit is responsible for the synthesis of L-tryptophan from indole and L-serine. This Prochlorococcus marinus (strain NATL2A) protein is Tryptophan synthase beta chain.